The chain runs to 348 residues: Selenide, water dikinase (348 aa).

Residue Cys-17 is part of the active site. ATP is bound by residues Lys-20 and 48–50 (TRD). Asp-51 provides a ligand contact to Mg(2+). ATP contacts are provided by residues Asp-68, Asp-91, and 139–141 (GHS). Mg(2+) is bound at residue Asp-91. Asp-227 contacts Mg(2+).

It belongs to the selenophosphate synthase 1 family. Class I subfamily. In terms of assembly, homodimer. Mg(2+) serves as cofactor.

The enzyme catalyses hydrogenselenide + ATP + H2O = selenophosphate + AMP + phosphate + 2 H(+). Synthesizes selenophosphate from selenide and ATP. The protein is Selenide, water dikinase of Yersinia pestis.